The chain runs to 189 residues: Protein GrpE (189 aa).

A disordered region spans residues Met1–Glu22. Residues Gln10–Glu22 show a composition bias toward acidic residues.

Belongs to the GrpE family. Homodimer.

The protein localises to the cytoplasm. Participates actively in the response to hyperosmotic and heat shock by preventing the aggregation of stress-denatured proteins, in association with DnaK and GrpE. It is the nucleotide exchange factor for DnaK and may function as a thermosensor. Unfolded proteins bind initially to DnaJ; upon interaction with the DnaJ-bound protein, DnaK hydrolyzes its bound ATP, resulting in the formation of a stable complex. GrpE releases ADP from DnaK; ATP binding to DnaK triggers the release of the substrate protein, thus completing the reaction cycle. Several rounds of ATP-dependent interactions between DnaJ, DnaK and GrpE are required for fully efficient folding. The chain is Protein GrpE from Leuconostoc citreum (strain KM20).